Reading from the N-terminus, the 170-residue chain is Odorant-binding protein 2a (170 aa).

An N-terminal signal peptide occupies residues 1–15; sequence MKTLFLGVTLGLAAA. Cysteines 74 and 166 form a disulfide.

Belongs to the calycin superfamily. Lipocalin family. In terms of assembly, monomer. As to expression, strongly expressed in the nasal structures, salivary and lachrymal glands, and lung. Expressed in the liver.

Its subcellular location is the secreted. Its function is as follows. Binds and transports small hydrophobic volatile molecules with a higher affinity for aldehydes and large fatty acids, including undecanal, palmitic acid, efficient aldehydes, benzenic aldehydes, heterocyclic aldehydes and aliphatic acids. This chain is Odorant-binding protein 2a (OBP2A), found in Homo sapiens (Human).